We begin with the raw amino-acid sequence, 466 residues long: Glutamate--tRNA ligase 2 (466 aa).

Residues 9–19 (PSPTGYLHVGG) carry the 'HIGH' region motif. The 'KMSKS' region signature appears at 234–238 (PLSKR). Lys-237 is a binding site for ATP.

Belongs to the class-I aminoacyl-tRNA synthetase family. Glutamate--tRNA ligase type 1 subfamily. Monomer.

The protein localises to the cytoplasm. It catalyses the reaction tRNA(Glu) + L-glutamate + ATP = L-glutamyl-tRNA(Glu) + AMP + diphosphate. Functionally, catalyzes the attachment of glutamate to tRNA(Glu) in a two-step reaction: glutamate is first activated by ATP to form Glu-AMP and then transferred to the acceptor end of tRNA(Glu). This is Glutamate--tRNA ligase 2 from Pseudothermotoga lettingae (strain ATCC BAA-301 / DSM 14385 / NBRC 107922 / TMO) (Thermotoga lettingae).